The sequence spans 164 residues: Phosphopantetheine adenylyltransferase (164 aa).

Serine 9 contributes to the substrate binding site. ATP is bound by residues 9 to 10 (SF) and histidine 17. The substrate site is built by lysine 41, leucine 73, and lysine 87. ATP is bound by residues 88–90 (GLR), glutamate 98, and 123–129 (NSFLSSS).

It belongs to the bacterial CoaD family. In terms of assembly, homohexamer. Requires Mg(2+) as cofactor.

Its subcellular location is the cytoplasm. The enzyme catalyses (R)-4'-phosphopantetheine + ATP + H(+) = 3'-dephospho-CoA + diphosphate. Its pathway is cofactor biosynthesis; coenzyme A biosynthesis; CoA from (R)-pantothenate: step 4/5. In terms of biological role, reversibly transfers an adenylyl group from ATP to 4'-phosphopantetheine, yielding dephospho-CoA (dPCoA) and pyrophosphate. In Clostridium kluyveri (strain ATCC 8527 / DSM 555 / NBRC 12016 / NCIMB 10680 / K1), this protein is Phosphopantetheine adenylyltransferase.